The chain runs to 614 residues: Glutamine--fructose-6-phosphate aminotransferase [isomerizing] (614 aa).

Cysteine 2 functions as the Nucleophile; for GATase activity in the catalytic mechanism. The Glutamine amidotransferase type-2 domain maps to cysteine 2 to aspartate 223. SIS domains lie at tyrosine 292 to isoleucine 431 and isoleucine 463 to proline 604. The active-site For Fru-6P isomerization activity is lysine 609.

As to quaternary structure, homodimer.

It localises to the cytoplasm. The enzyme catalyses D-fructose 6-phosphate + L-glutamine = D-glucosamine 6-phosphate + L-glutamate. Catalyzes the first step in hexosamine metabolism, converting fructose-6P into glucosamine-6P using glutamine as a nitrogen source. The chain is Glutamine--fructose-6-phosphate aminotransferase [isomerizing] from Chlorobaculum tepidum (strain ATCC 49652 / DSM 12025 / NBRC 103806 / TLS) (Chlorobium tepidum).